Reading from the N-terminus, the 611-residue chain is Dihydroxy-acid dehydratase (611 aa).

D81 provides a ligand contact to Mg(2+). C122 contacts [2Fe-2S] cluster. Mg(2+) is bound by residues D123 and K124. K124 is subject to N6-carboxylysine. Position 195 (C195) interacts with [2Fe-2S] cluster. Residue E491 coordinates Mg(2+). Residue S517 is the Proton acceptor of the active site.

The protein belongs to the IlvD/Edd family. In terms of assembly, homodimer. The cofactor is [2Fe-2S] cluster. Mg(2+) is required as a cofactor.

The enzyme catalyses (2R)-2,3-dihydroxy-3-methylbutanoate = 3-methyl-2-oxobutanoate + H2O. It carries out the reaction (2R,3R)-2,3-dihydroxy-3-methylpentanoate = (S)-3-methyl-2-oxopentanoate + H2O. It functions in the pathway amino-acid biosynthesis; L-isoleucine biosynthesis; L-isoleucine from 2-oxobutanoate: step 3/4. It participates in amino-acid biosynthesis; L-valine biosynthesis; L-valine from pyruvate: step 3/4. In terms of biological role, functions in the biosynthesis of branched-chain amino acids. Catalyzes the dehydration of (2R,3R)-2,3-dihydroxy-3-methylpentanoate (2,3-dihydroxy-3-methylvalerate) into 2-oxo-3-methylpentanoate (2-oxo-3-methylvalerate) and of (2R)-2,3-dihydroxy-3-methylbutanoate (2,3-dihydroxyisovalerate) into 2-oxo-3-methylbutanoate (2-oxoisovalerate), the penultimate precursor to L-isoleucine and L-valine, respectively. In Brucella abortus (strain S19), this protein is Dihydroxy-acid dehydratase.